The sequence spans 728 residues: Catalase-peroxidase 1 (728 aa).

The signal sequence occupies residues methionine 1–alanine 22. Residues tryptophan 97 to tyrosine 225 constitute a cross-link (tryptophyl-tyrosyl-methioninium (Trp-Tyr) (with M-251)). The Proton acceptor role is filled by histidine 98. The tryptophyl-tyrosyl-methioninium (Tyr-Met) (with W-97) cross-link spans tyrosine 225–methionine 251. Histidine 266 provides a ligand contact to heme b.

The protein belongs to the peroxidase family. Peroxidase/catalase subfamily. In terms of assembly, homodimer or homotetramer. Requires heme b as cofactor. Formation of the three residue Trp-Tyr-Met cross-link is important for the catalase, but not the peroxidase activity of the enzyme.

It catalyses the reaction H2O2 + AH2 = A + 2 H2O. It carries out the reaction 2 H2O2 = O2 + 2 H2O. Its function is as follows. Bifunctional enzyme with both catalase and broad-spectrum peroxidase activity. The chain is Catalase-peroxidase 1 from Shewanella sp. (strain ANA-3).